Reading from the N-terminus, the 147-residue chain is Fluoride-specific ion channel FluC 1 (147 aa).

4 consecutive transmembrane segments (helical) span residues 29-49 (YVYIFIGGALGALLRYLISFL), 61-81 (IANLTGAFVMGLLTALTIAFF), 90-110 (AITTGFLGALTTFSTFQLELI), and 118-138 (FITLLLYAVTSYVFGILLCYV). Positions 97 and 100 each coordinate Na(+).

Belongs to the fluoride channel Fluc/FEX (TC 1.A.43) family.

It is found in the cell membrane. It carries out the reaction fluoride(in) = fluoride(out). Na(+) is not transported, but it plays an essential structural role and its presence is essential for fluoride channel function. Its function is as follows. Fluoride-specific ion channel. Important for reducing fluoride concentration in the cell, thus reducing its toxicity. In Staphylococcus aureus (strain MRSA252), this protein is Fluoride-specific ion channel FluC 1.